A 548-amino-acid polypeptide reads, in one-letter code: Thermosome subunit alpha (548 aa).

Positions Thr527–Met548 are disordered. Residues Gly531–Met548 show a composition bias toward gly residues.

Belongs to the TCP-1 chaperonin family. As to quaternary structure, forms a Heterooligomeric complex of two stacked eight-membered rings.

In terms of biological role, molecular chaperone; binds unfolded polypeptides in vitro, and has a weak ATPase activity. The sequence is that of Thermosome subunit alpha (thsA) from Thermococcus sp. (strain JCM 11816 / KS-1).